The sequence spans 211 residues: Intermembrane phospholipid transport system binding protein MlaC (211 aa).

Positions 1–21 are cleaved as a signal peptide; sequence MFKRLMMVALLVIAPLSAATA.

It belongs to the MlaC/ttg2D family. As to quaternary structure, interacts with the MlaA-OmpF outer membrane complex and with the inner membrane ABC transporter complex MlaFEDB, via direct interaction with MlaD.

The protein resides in the periplasm. In terms of biological role, involved in a phospholipid transport pathway that maintains lipid asymmetry in the outer membrane by retrograde trafficking of phospholipids from the outer membrane to the inner membrane. May transfer phospholipid across the periplasmic space and deliver it to the MlaFEDB complex at the inner membrane. This is Intermembrane phospholipid transport system binding protein MlaC from Escherichia coli (strain K12).